The sequence spans 466 residues: F-box only protein 15 (466 aa).

The F-box domain maps to 27–73; sequence SASLDSLPSEVLLKILSYLDAAALLCAGCVNRRFYHLANDNFIWIRI.

In terms of assembly, directly interacts with SKP1 and CUL1.

Functionally, substrate-recognition component of the SCF (SKP1-CUL1-F-box protein)-type E3 ubiquitin ligase complex. The polypeptide is F-box only protein 15 (FBXO15) (Bos taurus (Bovine)).